The primary structure comprises 518 residues: Retinal dehydrogenase 2 (518 aa).

NAD(+)-binding positions include 184–186 (IPW), 210–213 (KPAE), and 264–266 (STE). The active-site Proton acceptor is Glu-286. The Nucleophile role is filled by Cys-320. Residues 366–370 (KQYNK) and Glu-417 contribute to the NAD(+) site.

This sequence belongs to the aldehyde dehydrogenase family. Homotetramer.

It is found in the cytoplasm. The catalysed reaction is retinal + NAD(+) + H2O = retinoate + NADH + 2 H(+). It catalyses the reaction all-trans-retinal + NAD(+) + H2O = all-trans-retinoate + NADH + 2 H(+). It carries out the reaction all-trans-13,14-dihydroretinal + NAD(+) + H2O = all-trans-13,14-dihydroretinoate + NADH + 2 H(+). It functions in the pathway cofactor metabolism; retinol metabolism. Its function is as follows. Catalyzes the NAD-dependent oxidation of aldehyde substrates, such as all-trans-retinal and all-trans-13,14-dihydroretinal, to their corresponding carboxylic acids, all-trans-retinoate and all-trans-13,14-dihydroretinoate, respectively. Retinoate signaling is critical for the transcriptional control of many genes, for instance it is crucial for initiation of meiosis in both male and female. Recognizes retinal as substrate, both in its free form and when bound to cellular retinol-binding protein. Lacks activity with benzaldehyde, acetaldehyde and octanal. Displays complete lack of activity with citral. This chain is Retinal dehydrogenase 2 (ALDH1A2), found in Gallus gallus (Chicken).